The primary structure comprises 566 residues: MDVENLIITTLKDKVEELTGNEMDIRLDEPPAINMGDYSTNISFRLAKDLKKAPKVIAEDIANSLNISGIEKIEAVNGYINFFMNYSDFSKETVSKIIDEKENFGKLEKRHEKVILEHTSANPNGPFHIGHGRNMVIGDSLKRILVASGYDVETQYYVNDMGRQEAIVVFGNEKFELDKSKKADHAIGEVYVETNKLLAENEELEQEILNLMKNYEEACEAGIENELTEKFKNAVDYSLGGFKETLSTLNIYHDKFVWESEFVKSGMVREVIKRLMDTGKVVEDEVFRLDLSDYGLEKKLVLARLNGTSLYSTRDIAYHINKMENCDFAVNLLGADHKLTAVMVNKTLALLGYNEAEVVFYEFISLPEGSMSTRRGRFISMDELFEEAKSRAAEEVRKRGVAESEEEIEEIAKKIAVGAVRYNIVRIAPEKPMVFRWDEALDFEKVGCPVIQYAHARCSRILENVEIISNDNLFAYEMNENEKTIVKLLSKLPKIVEKAAEVRKPQIVANYVLDVAQGFNKFYANCPVLKEENQIIKNSRIAIVNNTKMVLENTLDLLGIEMPGKM.

The 'HIGH' region signature appears at 121-131 (ANPNGPFHIGH).

Belongs to the class-I aminoacyl-tRNA synthetase family.

The protein resides in the cytoplasm. It catalyses the reaction tRNA(Arg) + L-arginine + ATP = L-arginyl-tRNA(Arg) + AMP + diphosphate. The polypeptide is Arginine--tRNA ligase (Methanococcus maripaludis (strain C7 / ATCC BAA-1331)).